A 444-amino-acid polypeptide reads, in one-letter code: Ras-related protein RabX (444 aa).

29-36 (GGDVCSKN) is a GTP binding site. Positions 51–58 (LIQVFDDY) match the Effector region motif. 73–77 (EFSSI) contacts GTP. The segment at 91–136 (ENNKNKNNNNNYNYNNNNYNNNNNNNNNNNNNNNNNNNNNNNNNNS) is disordered. Residues 95–135 (NKNNNNNYNYNNNNYNNNNNNNNNNNNNNNNNNNNNNNNNN) are compositionally biased toward low complexity. GTP is bound at residue 207-210 (NDSN). Disordered stretches follow at residues 213–232 (TPNF…SNII) and 298–401 (LQGD…NNDL). Composition is skewed to low complexity over residues 217 to 232 (SDSS…SNII) and 303 to 399 (NNNN…TYNN). Cysteine 439 is lipidated: S-palmitoyl cysteine. Cysteine 441 bears the Cysteine methyl ester mark. A lipid anchor (S-geranylgeranyl cysteine) is attached at cysteine 441. Residues 442 to 444 (NLM) constitute a propeptide, removed in mature form.

It belongs to the small GTPase superfamily. Rab family.

The protein localises to the cell membrane. This Dictyostelium discoideum (Social amoeba) protein is Ras-related protein RabX (rabX).